Consider the following 252-residue polypeptide: Hydroxyacylglutathione hydrolase (252 aa).

Residues H54, H56, D58, H59, H111, D130, and H170 each coordinate Zn(2+).

The protein belongs to the metallo-beta-lactamase superfamily. Glyoxalase II family. In terms of assembly, monomer. Zn(2+) serves as cofactor.

It carries out the reaction an S-(2-hydroxyacyl)glutathione + H2O = a 2-hydroxy carboxylate + glutathione + H(+). It functions in the pathway secondary metabolite metabolism; methylglyoxal degradation; (R)-lactate from methylglyoxal: step 2/2. In terms of biological role, thiolesterase that catalyzes the hydrolysis of S-D-lactoyl-glutathione to form glutathione and D-lactic acid. The polypeptide is Hydroxyacylglutathione hydrolase (Francisella tularensis subsp. novicida (strain U112)).